A 285-amino-acid polypeptide reads, in one-letter code: Nucleotide-binding protein NTHI1314 (285 aa).

Residue 8–15 participates in ATP binding; sequence GRSGAGKS. 56-59 serves as a coordination point for GTP; it reads DIRN.

Belongs to the RapZ-like family.

Its function is as follows. Displays ATPase and GTPase activities. The protein is Nucleotide-binding protein NTHI1314 of Haemophilus influenzae (strain 86-028NP).